Consider the following 639-residue polypeptide: Bucky ball (639 aa).

The segment covering 178–187 (ATKECKEDPV) has biased composition (basic and acidic residues). Disordered stretches follow at residues 178–205 (ATKECKEDPVTRPTTYSDSAYDAESSQG), 218–242 (LDSSSVHEEEEEEEKDVNEEDEPQT), and 581–614 (RSWRQVTGPQDQGRTPLRRSTCKSIHQQRPRSEY). Over residues 189–205 (RPTTYSDSAYDAESSQG) the composition is skewed to polar residues. Over residues 225–240 (EEEEEEEKDVNEEDEP) the composition is skewed to acidic residues. Over residues 584–593 (RQVTGPQDQG) the composition is skewed to polar residues. The segment covering 596–609 (PLRRSTCKSIHQQR) has biased composition (basic residues). Symmetric dimethylarginine occurs at positions 627 and 629. 3 consecutive short sequence motifs (RG Motif) follow at residues 627-628 (RG), 629-630 (RG), and 635-636 (RG).

As to quaternary structure, specifically interacts (when methylated) with tdrd6 (via Tudor domain); interaction is responsible for recruitment of different protein complexes to germ plasm. Interacts with rbpms2 and dazl; interaction mediates Balbiani body formation. Interacts with kif5ba; interaction leads to buc enrichment at the embryonic cleavage furrows and mediates dorsoventral patterning. Post-translationally, symmetric dimethylarginine modification promotes interaction with tdrd6.

Its subcellular location is the cytoplasm. It is found in the cleavage furrow. Functionally, prion-like protein required for the formation of Balbiani body (electron-dense aggregates in the oocyte) and germ plasm assembly, and for the establishment of oocyte polarity during early oogenesis. Mobility and aggregation properties are improved by tudor domain-containing protein tdrd6 through interaction with dimethylated arginines Tri-RG domains. Establishes oocyte polarity through interactions with RNA-binding proteins rbpms2 and dazl, initiating a positive feedback loop amplification mechanism in the Balbiani body. Interaction of BUC protein and mRNA with rbpms2 and dazl is required to mediate Balbiani body formation. Involved in recruitment of germ plasm to embryonic cleavage furrows and dorsoventral patterning through interaction with Kinesin-1/KIF5BA. This is Bucky ball from Danio rerio (Zebrafish).